The chain runs to 300 residues: tRNA pseudouridine synthase B (300 aa).

Aspartate 38 functions as the Nucleophile in the catalytic mechanism.

The protein belongs to the pseudouridine synthase TruB family. Type 1 subfamily.

The enzyme catalyses uridine(55) in tRNA = pseudouridine(55) in tRNA. Functionally, responsible for synthesis of pseudouridine from uracil-55 in the psi GC loop of transfer RNAs. This chain is tRNA pseudouridine synthase B, found in Dehalococcoides mccartyi (strain ATCC BAA-2266 / KCTC 15142 / 195) (Dehalococcoides ethenogenes (strain 195)).